We begin with the raw amino-acid sequence, 216 residues long: [5-(aminomethyl)furan-3-yl]methyl phosphate kinase (216 aa).

ATP-binding positions include 5 to 9, G39, D142, 147 to 152, and G166; these read KIGGS and YDKFPG.

It belongs to the MfnE family. In terms of assembly, homotrimer. Mg(2+) serves as cofactor.

It catalyses the reaction [5-(aminomethyl)-3-furyl]methyl phosphate + ATP = [5-(aminomethyl)furan-3-yl]methyl diphosphate + ADP. Its pathway is cofactor biosynthesis; methanofuran biosynthesis. Inhibited by EDTA. Catalyzes the formation of 5-(aminomethyl)-3-furanmethanol diphosphate (F1-PP) from 5-(aminomethyl)-3-furanmethanol phosphate (F1-P) and ATP. In vitro, can also act as an adenylate kinase that catalyzes the transfer of a phosphoryl group from ATP to AMP, generating two molecules of ADP. The polypeptide is [5-(aminomethyl)furan-3-yl]methyl phosphate kinase (Methanocaldococcus jannaschii (strain ATCC 43067 / DSM 2661 / JAL-1 / JCM 10045 / NBRC 100440) (Methanococcus jannaschii)).